Reading from the N-terminus, the 287-residue chain is ATP synthase gamma chain (287 aa).

This sequence belongs to the ATPase gamma chain family. In terms of assembly, F-type ATPases have 2 components, CF(1) - the catalytic core - and CF(0) - the membrane proton channel. CF(1) has five subunits: alpha(3), beta(3), gamma(1), delta(1), epsilon(1). CF(0) has three main subunits: a, b and c.

The protein localises to the cell membrane. In terms of biological role, produces ATP from ADP in the presence of a proton gradient across the membrane. The gamma chain is believed to be important in regulating ATPase activity and the flow of protons through the CF(0) complex. This Mycoplasmopsis agalactiae (strain NCTC 10123 / CIP 59.7 / PG2) (Mycoplasma agalactiae) protein is ATP synthase gamma chain.